The following is a 591-amino-acid chain: Putative BTB/POZ domain-containing protein At5g13600 (591 aa).

The 68-residue stretch at 28-95 folds into the BTB domain; sequence PDVMIQVVDE…CYGVRIEVTP (68 aa). In terms of domain architecture, NPH3 spans 208–493; it reads NWWFNDVSSF…VQVLFFEQMR (286 aa). Tyr-434 is subject to Phosphotyrosine.

It belongs to the NPH3 family.

It functions in the pathway protein modification; protein ubiquitination. Its function is as follows. May act as a substrate-specific adapter of an E3 ubiquitin-protein ligase complex (CUL3-RBX1-BTB) which mediates the ubiquitination and subsequent proteasomal degradation of target proteins. This is Putative BTB/POZ domain-containing protein At5g13600 from Arabidopsis thaliana (Mouse-ear cress).